We begin with the raw amino-acid sequence, 361 residues long: MLGRALIRTFLSPTVPVAACTTQIAGVHHHKEAGDMKRFTGVTRSNKAKANRNTHVNEKLFRKMRGRKTLLVELPEDSARERESEMPPGEMRTELLKRGLNPYKEAQPRVWNEAQVTFQSIYGIADPYVPPETPASFTDVNNKFDEVKQRLQHKFYNWRMGTNRIRKKQGFEKFDVKTFCAKAEDIYERAHKAMEARDKKEMYRCITEYAFAKMWPDVENGSVRFELVSIVEPSRVVAVRCFDNPPKSGNDIAQITVRMHTRQKLALYDRFGGLILGSEDEEKDVVEYVVFENHIAVVDGEWRLHGKIYPKWIEPKQGTHITHQLTQKEAGVQVAKANALPLRTTEKLEEAKKEKEAANSS.

Belongs to the mitochondrion-specific ribosomal protein mL45 family.

The protein resides in the mitochondrion. In Caenorhabditis briggsae, this protein is Large ribosomal subunit protein mL45 (mrpl-45).